The primary structure comprises 329 residues: MIDNNQTCAAGQDSVPYVTCMIYVLEEWLGVEQLEDYLNFANHLLWVFTPLILLILPYFTIFLLYLTIIFLHIYKRKNVLKEAYSHNLWDGARKTVATLWDGHAAVWHGYEVHGMEKIPEGAALIIFYHGAIPIDFYYFMAKIFIQKGRTCRVVADHFVFKIPGFSLLLDVFCALHGPREKCVEILRSGHLLAISPGGVREALLSDETYNIIWGNRKGFAQVAIDAKVPIIPMFTQNIREGFRSLGGTRLFKWLYEKFRYPFAPMYGGFPVKLRTFLGDPIPYDPKVTAEELAEKTKNAVQALIDKHQRIPGNIRSALLDRFHKEQKAH.

The Lumenal portion of the chain corresponds to 1–50 (MIDNNQTCAAGQDSVPYVTCMIYVLEEWLGVEQLEDYLNFANHLLWVFTP). N5 carries N-linked (GlcNAc...) asparagine glycosylation. A helical transmembrane segment spans residues 51-71 (LILLILPYFTIFLLYLTIIFL). Residues 72 to 120 (HIYKRKNVLKEAYSHNLWDGARKTVATLWDGHAAVWHGYEVHGMEKIPE) are Cytoplasmic-facing. A helical transmembrane segment spans residues 121 to 141 (GAALIIFYHGAIPIDFYYFMA). H129 is an active-site residue. Topologically, residues 142-329 (KIFIQKGRTC…DRFHKEQKAH (188 aa)) are lumenal.

The protein belongs to the diacylglycerol acyltransferase family. Highly divergent. In terms of tissue distribution, widely expressed, with highest level in the brain, followed by lung and duodenum, and lowest levels in tongue, testis, skin and ileum.

It localises to the endoplasmic reticulum membrane. It carries out the reaction a 1,2-diacylglycerol + a 1,2-diacyl-sn-glycero-3-phosphocholine = a triacylglycerol + a 1-acyl-sn-glycero-3-phosphocholine. The enzyme catalyses a 1-O-alkyl-2-acyl-sn-glycero-3-phosphocholine + a 1,2-diacylglycerol = a 1-O-alkyl-sn-glycero-3-phosphocholine + a triacylglycerol. The catalysed reaction is a 2-acylglycerol + an acyl-CoA = a 1,2-diacylglycerol + CoA. It catalyses the reaction an acyl-CoA + a 1,2-diacyl-sn-glycerol = a triacyl-sn-glycerol + CoA. It carries out the reaction 2-(9Z-octadecenoyl)-glycerol + (9Z)-octadecenoyl-CoA = 1,2-di-(9Z-octadecenoyl)-glycerol + CoA. The enzyme catalyses 1,2-di-(9Z-octadecenoyl)-sn-glycerol + (9Z)-octadecenoyl-CoA = 1,2,3-tri-(9Z-octadecenoyl)-glycerol + CoA. Its activity is regulated as follows. Acyltransferase activity is specifically inhibited by TMX1 at the endoplasmic reticulum, restricting accumulation of triacylglycerol. Its function is as follows. Catalytic subunit of the alternative triglyceride biosynthesis pathway, which mediates formation of triacylglycerol from diacylglycerol and membrane phospholipids. Synthesizes triacylglycerol at the expense of membrane phospholipids, such as phosphatidylcholine (PC) and its ether-linked form (ePC), thereby altering the composition of membranes. The alternative triglyceride biosynthesis pathway is probably required to provide the energy required for rapid growth when fuel sources are limiting. It maintains mitochondrial function during periods of extracellular lipid starvation. Can also use acyl-CoA as donor: acts as a acyl-CoA:monoacylglycerol acyltransferase (MGAT), but also shows acyl-CoA:diacylglycerol acyltransferase (DGAT) activity. This chain is DGAT1/2-independent enzyme synthesizing storage lipids, found in Mus musculus (Mouse).